A 337-amino-acid polypeptide reads, in one-letter code: UDP-3-O-acylglucosamine N-acyltransferase (337 aa).

Catalysis depends on H238, which acts as the Proton acceptor.

This sequence belongs to the transferase hexapeptide repeat family. LpxD subfamily. In terms of assembly, homotrimer.

The catalysed reaction is a UDP-3-O-[(3R)-3-hydroxyacyl]-alpha-D-glucosamine + a (3R)-hydroxyacyl-[ACP] = a UDP-2-N,3-O-bis[(3R)-3-hydroxyacyl]-alpha-D-glucosamine + holo-[ACP] + H(+). It functions in the pathway bacterial outer membrane biogenesis; LPS lipid A biosynthesis. Its function is as follows. Catalyzes the N-acylation of UDP-3-O-acylglucosamine using 3-hydroxyacyl-ACP as the acyl donor. Is involved in the biosynthesis of lipid A, a phosphorylated glycolipid that anchors the lipopolysaccharide to the outer membrane of the cell. In Xanthomonas oryzae pv. oryzae (strain KACC10331 / KXO85), this protein is UDP-3-O-acylglucosamine N-acyltransferase.